Consider the following 182-residue polypeptide: Ribosome maturation factor RimM (182 aa).

The PRC barrel domain occupies 102 to 182 (EEGDYYWKDL…SIEVDWDPGF (81 aa)).

Belongs to the RimM family. In terms of assembly, binds ribosomal protein uS19.

The protein resides in the cytoplasm. Its function is as follows. An accessory protein needed during the final step in the assembly of 30S ribosomal subunit, possibly for assembly of the head region. Essential for efficient processing of 16S rRNA. May be needed both before and after RbfA during the maturation of 16S rRNA. It has affinity for free ribosomal 30S subunits but not for 70S ribosomes. The sequence is that of Ribosome maturation factor RimM from Escherichia fergusonii (strain ATCC 35469 / DSM 13698 / CCUG 18766 / IAM 14443 / JCM 21226 / LMG 7866 / NBRC 102419 / NCTC 12128 / CDC 0568-73).